A 327-amino-acid polypeptide reads, in one-letter code: Chain length determinant protein (327 aa).

At 1 to 31 the chain is on the cytoplasmic side; the sequence is MTVDSNTSSGRGNDPEQIDLIELLLQLWRGK. The chain crosses the membrane as a helical span at residues 32–52; it reads MTIIVAVIIAILLAVGYLMIA. Residues 53 to 294 lie on the Periplasmic side of the membrane; that stretch reads KEKWTSTAII…LPVRRDSPKT (242 aa). A helical membrane pass occupies residues 295-315; the sequence is AITLVLAVLLGGMIGAGIVLG. Residues 316-327 lie on the Cytoplasmic side of the membrane; that stretch reads RNALRSYKPKAL.

Belongs to the WzzB/Cld/Rol family.

The protein localises to the cell inner membrane. It participates in bacterial outer membrane biogenesis; lipopolysaccharide biosynthesis. Confers a modal distribution of chain length on the O-antigen component of lipopolysaccharide (LPS). Gives rise to a reduced number of short chain molecules and increases in numbers of longer molecules, with a modal value of 20. The sequence is that of Chain length determinant protein (wzzB) from Salmonella typhimurium (strain LT2 / SGSC1412 / ATCC 700720).